Reading from the N-terminus, the 332-residue chain is MTASPVRHVPVLGREAVAMLAPRAGGVYVDATFGAGGYSRAILAVADTRVIGIDRDRSAIAGGFALVEESGGRLTLVEDRFSNLAAVCAAEGADVVDGIVMDVGVSSMQLDEADRGFSFRLDGPLDMRMSGHGPTAADVVARASETDLANIIYIFGEERRSRAVARAIVAARRDAPVATTRALADIVSKVVRAKPHEIHPATRTFQALRIFVNEELDELIAALAAAERVLRPGGRLAVVSFHSLEDRIVKNFFALRGKTGGGSRHRPEIERAAPSFAILTRRPVTAGQEEVSANPRARSAKLRAAERTAAPATADDGESPGWPSLANVMRGG.

S-adenosyl-L-methionine is bound by residues 36–38 (GGY), Asp-54, Phe-81, Asp-102, and Gln-109. Positions 284 to 332 (VTAGQEEVSANPRARSAKLRAAERTAAPATADDGESPGWPSLANVMRGG) are disordered.

The protein belongs to the methyltransferase superfamily. RsmH family.

The protein resides in the cytoplasm. The catalysed reaction is cytidine(1402) in 16S rRNA + S-adenosyl-L-methionine = N(4)-methylcytidine(1402) in 16S rRNA + S-adenosyl-L-homocysteine + H(+). In terms of biological role, specifically methylates the N4 position of cytidine in position 1402 (C1402) of 16S rRNA. The chain is Ribosomal RNA small subunit methyltransferase H from Nitrobacter hamburgensis (strain DSM 10229 / NCIMB 13809 / X14).